The following is a 312-amino-acid chain: Taste receptor type 2 member 135 (312 aa).

At 1-19 (MSTGHTVLGCQTTDKTVVT) the chain is on the extracellular side. Residues 20–40 (LFIILVLLCLVAVVGNGFIII) traverse the membrane as a helical segment. Residues 41 to 66 (ALGMKWLLRRTLSAHNKLLISLAASR) are Cytoplasmic-facing. A helical membrane pass occupies residues 67–87 (FCLQCVVIGKNIYVFLNPTSF). Over 88–97 (PYNPVIQLLN) the chain is Extracellular. A helical membrane pass occupies residues 98 to 118 (LMWDFLTAATIWLCSLLGFFY). At 119–140 (CVKIATLTHPVFVWLKYRLPGW) the chain is on the cytoplasmic side. Residues 141–161 (VPWMLLSAVGMSSLTSILCFI) traverse the membrane as a helical segment. Residues 162–198 (GNYMIYQNHAKSGHQPWNVTGNSLRHSLEKFYFFSIK) lie on the Extracellular side of the membrane. Asparagine 179 is a glycosylation site (N-linked (GlcNAc...) asparagine). A helical membrane pass occupies residues 199 to 219 (IIMWTIPTVVFSIFMSLLLVS). Residues 220 to 244 (LVRHMKKTFLALSELRDVWAQAHFK) are Cytoplasmic-facing. Residues 245 to 265 (ALLPLLSFIVLFISCFLTLVL) traverse the membrane as a helical segment. At 266–277 (SSASNTPYQEFR) the chain is on the extracellular side. A helical membrane pass occupies residues 278–298 (YWMWQVVIHLCTVIHPIVILF). Residues 299–312 (SNPVLRVVIKRGCC) are Cytoplasmic-facing.

The protein belongs to the G-protein coupled receptor T2R family.

It localises to the membrane. In terms of biological role, putative taste receptor which may play a role in the perception of bitterness. The chain is Taste receptor type 2 member 135 (Tas2r135) from Mus musculus (Mouse).